A 162-amino-acid chain; its full sequence is MRISKPHLRITSIQCYVCLLLNTHFLTEAGIRVFILGCISAGIPKTEANWEDVRKDLQKIENLIQSLHMDATLYTESDVHPRCKVTAMNCFLLELEVISHESRDGDIEETVKNLILLANSSLSSNGNITESGCKVCEELEEKNITEFLESFKHIVQMFINPP.

Residues 1-29 (MRISKPHLRITSIQCYVCLLLNTHFLTEA) form the signal peptide. A propeptide spanning residues 30–48 (GIRVFILGCISAGIPKTEA) is cleaved from the precursor. Disulfide bonds link Cys83-Cys133 and Cys90-Cys136. Asn119, Asn127, and Asn143 each carry an N-linked (GlcNAc...) asparagine glycan.

It belongs to the IL-15/IL-21 family.

The protein localises to the secreted. Its function is as follows. Cytokine that plays a major role in the development of inflammatory and protective immune responses to microbial invaders and parasites by modulating immune cells of both the innate and adaptive immune systems. Stimulates the proliferation of natural killer cells, T-cells and B-cells and promotes the secretion of several cytokines. In monocytes, induces the production of IL8 and monocyte chemotactic protein 1/CCL2, two chemokines that attract neutrophils and monocytes respectively to sites of infection. Unlike most cytokines, which are secreted in soluble form, IL15 is expressed in association with its high affinity IL15RA on the surface of IL15-producing cells and delivers signals to target cells that express IL2RB and IL2RG receptor subunits. Binding to its receptor triggers the phosphorylation of JAK1 and JAK3 and the recruitment and subsequent phosphorylation of signal transducer and activator of transcription-3/STAT3 and STAT5. In mast cells, induces the rapid tyrosine phosphorylation of STAT6 and thereby controls mast cell survival and release of cytokines such as IL4. The polypeptide is Interleukin-15 (IL15) (Marmota monax (Woodchuck)).